A 289-amino-acid polypeptide reads, in one-letter code: Oxaloacetate decarboxylase (289 aa).

Residue S50 coordinates substrate. D88 is a Mg(2+) binding site. Residues R159 and H235 each contribute to the substrate site.

Belongs to the isocitrate lyase/PEP mutase superfamily. Oxaloacetate decarboxylase family. In terms of assembly, homotetramer; dimer of dimers. Requires Mg(2+) as cofactor.

It catalyses the reaction oxaloacetate + H(+) = pyruvate + CO2. In terms of biological role, catalyzes the decarboxylation of oxaloacetate into pyruvate. Seems to play a role in maintaining cellular concentrations of bicarbonate and pyruvate. The sequence is that of Oxaloacetate decarboxylase from Pseudomonas fluorescens (strain ATCC BAA-477 / NRRL B-23932 / Pf-5).